The sequence spans 207 residues: N-(5'-phosphoribosyl)anthranilate isomerase (207 aa).

It belongs to the TrpF family.

It catalyses the reaction N-(5-phospho-beta-D-ribosyl)anthranilate = 1-(2-carboxyphenylamino)-1-deoxy-D-ribulose 5-phosphate. It functions in the pathway amino-acid biosynthesis; L-tryptophan biosynthesis; L-tryptophan from chorismate: step 3/5. This is N-(5'-phosphoribosyl)anthranilate isomerase from Staphylococcus epidermidis (strain ATCC 35984 / DSM 28319 / BCRC 17069 / CCUG 31568 / BM 3577 / RP62A).